We begin with the raw amino-acid sequence, 151 residues long: Protein SprT-like (151 aa).

Residues 7 to 146 (QSLTESIAIK…CGRCGGILKL (140 aa)) form the SprT-like domain. Position 67 (H67) interacts with Zn(2+). E68 is a catalytic residue. H71 contacts Zn(2+).

It belongs to the SprT family. Zn(2+) serves as cofactor.

The protein localises to the cytoplasm. The protein is Protein SprT-like of Staphylococcus epidermidis (strain ATCC 35984 / DSM 28319 / BCRC 17069 / CCUG 31568 / BM 3577 / RP62A).